We begin with the raw amino-acid sequence, 364 residues long: MAARQQQKGTGFGVQYEDFVPKSEWKDQPEATILNIDLTGFAKEQMKVTYVHSSKMIRVTGERPLANRKWSRFNEVFTVPQNCLVDKIHGSFKNNVLTITMPKETITKVAYLPETSRTEAAALEKAAKLEEKRLLEESRRKEKEEEEAKQMKKQLLEEKEALIRKLQEEAKAKEEAEMRKLQEEAKAKEEAAAKKLQEEIEAKEKLEERKLEERRLEERKLEDMNLAEEAKLKKIQERKSVDESGEKEKILKPEVVYTKSGHVATPKPESGSGLKSGFGGVGEVVKSAEEKLGNLVEKEKKMGKGIMEKIRRKEITSEEKKLMMNVGVAALVIFALGAYVSYTFCSSSSSSSSPSSSSSSTKPE.

Residues 14–121 (VQYEDFVPKS…LPETSRTEAA (108 aa)) form the sHSP domain. The A-1 repeat unit spans residues 129–133 (LEEKR). Positions 129–220 (LEEKRLLEES…LEERRLEERK (92 aa)) are 6 X 5 AA repeats A of L-E-E-[SKR]-[ERK]. One copy of the A-2 repeat lies at 135–139 (LEESR). The stretch at 156-160 (LEEKE) is one A-3 repeat. Residues 163–176 (IRKLQEEAKAKEEA) form a B-1 repeat. A 3 X 14 AA repeats B of [IMA]-[RK]-K-L-Q-E-E-A-K-A-K-E-[EK]-[LA] region spans residues 163–206 (IRKLQEEAKAKEEAEMRKLQEEAKAKEEAAAKKLQEEIEAKEKL). The stretch at 178–191 (MRKLQEEAKAKEEA) is one B-2 repeat. One copy of the B-3 repeat lies at 193-205 (AKKLQEEIEAKEK). The stretch at 206-210 (LEERK) is one A-4 repeat. Residues 211 to 215 (LEERR) form an A-5 repeat. One copy of the A-6 repeat lies at 216 to 220 (LEERK). Residues 322–342 (LMMNVGVAALVIFALGAYVSY) traverse the membrane as a helical segment. The tract at residues 345–364 (CSSSSSSSSPSSSSSSTKPE) is disordered. Low complexity predominate over residues 346 to 364 (SSSSSSSSPSSSSSSTKPE).

Belongs to the small heat shock protein (HSP20) family.

Its subcellular location is the cell membrane. Functionally, seems to not be involved in heat resistance. Unable to mediate restriction of long-distance movement of the pathogenic tobacco etch virus (TEV) without causing a hypersensitive response or inducing systemic acquired resistance. This is Inactive protein RESTRICTED TEV MOVEMENT 2 (RTM2) from Arabidopsis thaliana (Mouse-ear cress).